Consider the following 74-residue polypeptide: AECLMIGDTSCVPRLGRRCCYGAWCYCDQQLSCRRVGRKRECGWVEVNCKCGWSWSQRIDDWRADYSCKCPEDQ.

Contains 6 disulfide bonds. In terms of tissue distribution, expressed by the venom gland.

It is found in the secreted. Functionally, potently blocks vertebrate calcium channels Cav1 and Cav2. Is the most active on Cav2.2/CACNA1B (from HEK) (IC(50)=2.3 nM), followed by Cav2.1/CACNA1A (IC(50)=4.3 nM), Cav2.2/CACNA1B (from oocyte) (IC(50)=14.4 nM), Cav1.2/CACNA1C (IC(50)=26.8 nM), and Cav2.3/CACNA1E (IC(50)=96.4 nM). This is Omega-filistatoxin-Kh1a from Kukulcania hibernalis (Southern house spider).